Consider the following 492-residue polypeptide: Protein nucleotidyltransferase YdiU (492 aa).

The ATP site is built by glycine 90, glycine 92, arginine 93, lysine 113, aspartate 125, glycine 126, arginine 176, and arginine 183. Aspartate 252 acts as the Proton acceptor in catalysis. 2 residues coordinate Mg(2+): asparagine 253 and aspartate 262. Position 262 (aspartate 262) interacts with ATP.

It belongs to the SELO family. Mg(2+) is required as a cofactor. It depends on Mn(2+) as a cofactor.

The enzyme catalyses L-seryl-[protein] + ATP = 3-O-(5'-adenylyl)-L-seryl-[protein] + diphosphate. It carries out the reaction L-threonyl-[protein] + ATP = 3-O-(5'-adenylyl)-L-threonyl-[protein] + diphosphate. It catalyses the reaction L-tyrosyl-[protein] + ATP = O-(5'-adenylyl)-L-tyrosyl-[protein] + diphosphate. The catalysed reaction is L-histidyl-[protein] + UTP = N(tele)-(5'-uridylyl)-L-histidyl-[protein] + diphosphate. The enzyme catalyses L-seryl-[protein] + UTP = O-(5'-uridylyl)-L-seryl-[protein] + diphosphate. It carries out the reaction L-tyrosyl-[protein] + UTP = O-(5'-uridylyl)-L-tyrosyl-[protein] + diphosphate. In terms of biological role, nucleotidyltransferase involved in the post-translational modification of proteins. It can catalyze the addition of adenosine monophosphate (AMP) or uridine monophosphate (UMP) to a protein, resulting in modifications known as AMPylation and UMPylation. This Thioalkalivibrio sulfidiphilus (strain HL-EbGR7) protein is Protein nucleotidyltransferase YdiU.